We begin with the raw amino-acid sequence, 210 residues long: Frataxin, mitochondrial (210 aa).

Residues 1-41 (MWTLGRRAVAGLLASPSPAQAQTLTRVPRPAELAPLCGRRG) constitute a mitochondrion transit peptide.

It belongs to the frataxin family. As to quaternary structure, component of the mitochondrial core iron-sulfur cluster (ISC) complex composed of NFS1, LYRM4, NDUFAB1, ISCU, FXN, and FDX2; this complex is a heterohexamer containing two copies of each monomer. Homodimer. Monomer (probable predominant form). Oligomer. Monomers and polymeric aggregates of &gt;1 MDa have been isolated from mitochondria. A small fraction of heterologous overexpressed recombinant frataxin forms high-molecular weight aggregates that incorporate iron. Interacts with LYRM4. Interacts (via ferrous form) with ISCU; the interaction is possible when both are bound to the dimeric form of the cysteine desulfurase complex (NFS1:LYRM4) and the interaction enhances FXN interaction to the dimeric form of the cysteine desulfurase complex (NFS1:LYRM4). Interacts with FECH; one iron-bound FXN monomer seems to interact with a FECH homodimer. Interacts with SDHA and SDHB. Interacts with ACO2; the interaction is dependent on citrate. Interacts with HSPA9. Interacts with ACO1. Interacts with ISCU (cytoplasmic form). In terms of processing, processed in two steps by mitochondrial processing peptidase (MPP). MPP first cleaves the precursor to intermediate form and subsequently converts the intermediate to yield frataxin mature form (frataxin(81-210)) which is the predominant form. The additional forms, frataxin(56-210) and frataxin(78-210), seem to be produced when the normal maturation process is impaired; their physiological relevance is unsure. Expressed in the heart, peripheral blood lymphocytes and dermal fibroblasts.

The protein resides in the mitochondrion. Its subcellular location is the cytoplasm. It localises to the cytosol. The catalysed reaction is 4 Fe(2+) + O2 + 4 H(+) = 4 Fe(3+) + 2 H2O. Its function is as follows. Functions as an activator of persulfide transfer to the scaffoding protein ISCU as component of the core iron-sulfur cluster (ISC) assembly complex and participates to the [2Fe-2S] cluster assembly. Accelerates sulfur transfer from NFS1 persulfide intermediate to ISCU and to small thiols such as L-cysteine and glutathione leading to persulfuration of these thiols and ultimately sulfide release. Binds ferrous ion and is released from FXN upon the addition of both L-cysteine and reduced FDX2 during [2Fe-2S] cluster assembly. The core iron-sulfur cluster (ISC) assembly complex is involved in the de novo synthesis of a [2Fe-2S] cluster, the first step of the mitochondrial iron-sulfur protein biogenesis. This process is initiated by the cysteine desulfurase complex (NFS1:LYRM4:NDUFAB1) that produces persulfide which is delivered on the scaffold protein ISCU in a FXN-dependent manner. Then this complex is stabilized by FDX2 which provides reducing equivalents to accomplish the [2Fe-2S] cluster assembly. Finally, the [2Fe-2S] cluster is transferred from ISCU to chaperone proteins, including HSCB, HSPA9 and GLRX5. May play a role in the protection against iron-catalyzed oxidative stress through its ability to catalyze the oxidation of Fe(2+) to Fe(3+); the oligomeric form but not the monomeric form has in vitro ferroxidase activity. May be able to store large amounts of iron in the form of a ferrihydrite mineral by oligomerization; however, the physiological relevance is unsure as reports are conflicting and the function has only been shown using heterologous overexpression systems. May function as an iron chaperone protein that protects the aconitase [4Fe-4S]2+ cluster from disassembly and promotes enzyme reactivation. May play a role as a high affinity iron binding partner for FECH that is capable of both delivering iron to ferrochelatase and mediating the terminal step in mitochondrial heme biosynthesis. Modulates the RNA-binding activity of ACO1. May be involved in the cytoplasmic iron-sulfur protein biogenesis. May contribute to oxidative stress resistance and overall cell survival. This is Frataxin, mitochondrial from Homo sapiens (Human).